Reading from the N-terminus, the 461-residue chain is Siroheme synthase (461 aa).

The interval 1 to 204 (MDYFPIFCQL…GDTTQAQQQV (204 aa)) is precorrin-2 dehydrogenase /sirohydrochlorin ferrochelatase. NAD(+) is bound by residues 22–23 (EV) and 43–44 (GR). Position 128 is a phosphoserine (serine 128). A uroporphyrinogen-III C-methyltransferase region spans residues 216 to 461 (GEVTLVGAGP…NWFRCEAASA (246 aa)). An S-adenosyl-L-methionine-binding site is contributed by proline 225. The active-site Proton acceptor is aspartate 248. Lysine 270 serves as the catalytic Proton donor. Residues 301–303 (GGD), isoleucine 306, 331–332 (TA), methionine 382, and glycine 411 contribute to the S-adenosyl-L-methionine site.

It in the N-terminal section; belongs to the precorrin-2 dehydrogenase / sirohydrochlorin ferrochelatase family. This sequence in the C-terminal section; belongs to the precorrin methyltransferase family.

It carries out the reaction uroporphyrinogen III + 2 S-adenosyl-L-methionine = precorrin-2 + 2 S-adenosyl-L-homocysteine + H(+). The catalysed reaction is precorrin-2 + NAD(+) = sirohydrochlorin + NADH + 2 H(+). It catalyses the reaction siroheme + 2 H(+) = sirohydrochlorin + Fe(2+). It functions in the pathway cofactor biosynthesis; adenosylcobalamin biosynthesis; precorrin-2 from uroporphyrinogen III: step 1/1. The protein operates within cofactor biosynthesis; adenosylcobalamin biosynthesis; sirohydrochlorin from precorrin-2: step 1/1. It participates in porphyrin-containing compound metabolism; siroheme biosynthesis; precorrin-2 from uroporphyrinogen III: step 1/1. Its pathway is porphyrin-containing compound metabolism; siroheme biosynthesis; siroheme from sirohydrochlorin: step 1/1. It functions in the pathway porphyrin-containing compound metabolism; siroheme biosynthesis; sirohydrochlorin from precorrin-2: step 1/1. Its function is as follows. Multifunctional enzyme that catalyzes the SAM-dependent methylations of uroporphyrinogen III at position C-2 and C-7 to form precorrin-2 via precorrin-1. Then it catalyzes the NAD-dependent ring dehydrogenation of precorrin-2 to yield sirohydrochlorin. Finally, it catalyzes the ferrochelation of sirohydrochlorin to yield siroheme. The chain is Siroheme synthase from Edwardsiella ictaluri (strain 93-146).